Reading from the N-terminus, the 882-residue chain is DNA mismatch repair protein MutS (882 aa).

626–633 lines the ATP pocket; sequence GPNMAGKS.

Belongs to the DNA mismatch repair MutS family.

Functionally, this protein is involved in the repair of mismatches in DNA. It is possible that it carries out the mismatch recognition step. This protein has a weak ATPase activity. The protein is DNA mismatch repair protein MutS of Anaeromyxobacter sp. (strain Fw109-5).